A 158-amino-acid polypeptide reads, in one-letter code: Lipoprotein signal peptidase (158 aa).

4 helical membrane passes run 7-27 (LFWI…YWVV), 38-58 (ILPG…FSLF), 67-87 (WLSL…PVLE), and 95-115 (GLIL…GYVV). Residues aspartate 116 and aspartate 132 contribute to the active site. The helical transmembrane segment at 125–145 (FAVFNMADSFISIGIVCLLLA) threads the bilayer.

It belongs to the peptidase A8 family.

The protein resides in the cell inner membrane. The enzyme catalyses Release of signal peptides from bacterial membrane prolipoproteins. Hydrolyzes -Xaa-Yaa-Zaa-|-(S,diacylglyceryl)Cys-, in which Xaa is hydrophobic (preferably Leu), and Yaa (Ala or Ser) and Zaa (Gly or Ala) have small, neutral side chains.. The protein operates within protein modification; lipoprotein biosynthesis (signal peptide cleavage). This protein specifically catalyzes the removal of signal peptides from prolipoproteins. This is Lipoprotein signal peptidase from Trichormus variabilis (strain ATCC 29413 / PCC 7937) (Anabaena variabilis).